Consider the following 726-residue polypeptide: Beta-glucosidase cel3A (726 aa).

The signal sequence occupies residues 1–20 (MASRLVAGLQVLALAGTATA). N-linked (GlcNAc...) asparagine glycans are attached at residues Asn223 and Asn592.

The protein belongs to the glycosyl hydrolase 3 family.

The protein resides in the secreted. It carries out the reaction Hydrolysis of terminal, non-reducing beta-D-glucosyl residues with release of beta-D-glucose.. Its pathway is glycan metabolism; cellulose degradation. Beta-glucosidases are one of a number of cellulolytic enzymes involved in the degradation of cellulosic biomass. Catalyzes the last step releasing glucose from the inhibitory cellobiose. Has a broad substrate specificity but preferentially hydrolyzes highly polymerized 1,3- and 1,4-beta-glucans. The protein is Beta-glucosidase cel3A of Pyricularia oryzae (strain 70-15 / ATCC MYA-4617 / FGSC 8958) (Rice blast fungus).